The chain runs to 318 residues: Pantothenate kinase (318 aa).

96-103 (GSVAVGKS) contacts ATP.

The protein belongs to the prokaryotic pantothenate kinase family.

Its subcellular location is the cytoplasm. The catalysed reaction is (R)-pantothenate + ATP = (R)-4'-phosphopantothenate + ADP + H(+). It functions in the pathway cofactor biosynthesis; coenzyme A biosynthesis; CoA from (R)-pantothenate: step 1/5. This is Pantothenate kinase from Rhodopseudomonas palustris (strain BisB5).